The sequence spans 494 residues: Flavin-containing monooxygenase ustF2 (494 aa).

A signal peptide spans 1 to 21 (MANPQTTRVAVVGAGISGVLA). 13-18 (GAGISG) contacts FAD. Residues 73-93 (EPSYPAMKPSKADPPATNEQE) form a disordered region. 250–255 (GGGVSS) contributes to the NADP(+) binding site. Asparagine 459 carries N-linked (GlcNAc...) asparagine glycosylation.

It belongs to the FMO family.

Its pathway is mycotoxin biosynthesis. In terms of biological role, flavin-containing monooxygenase; part of the gene cluster that mediates the biosynthesis of the secondary metabolite ustiloxin B, an antimitotic tetrapeptide. First, ustA is processed by the subtilisin-like endoprotease Kex2 that is outside the ustiloxin B gene cluster, at the C-terminal side of Arg-Lys, after transfer to Golgi apparatus through the endoplasmic reticulum (ER). Cleavage by KEX2 generates 16 peptides YAIG-I to YAIG-XVI. To process the precursor peptide further, at least two peptidases are necessary to cleave the N-terminal and C-terminal sides of the Tyr-Ala-Ile-Gly core peptide which serves as backbone for the synthesis of ustiloxin B, through cyclization and modification of the tyrosine with a non-protein coding amino acid, norvaline. One of the two peptidases must be the serine peptidase ustP; and the other pepdidase is probably ustH. Macrocyclization of the core peptide derived from ustA requires the tyrosinase ustQ, as well as the homologous oxidases ustYa and ustYb, and leads to the production of the first cyclization product N-desmethylustiloxin F. For the formation of N-desmethylustiloxin F, three oxidation steps are required, hydroxylation at the benzylic position, hydroxylation at either the aromatic ring of Tyr or beta-position of Ile, and oxidative cyclization. UstQ may catalyze the oxidation of a phenol moiety, whereas the ustYa and ustYb are most likely responsible for the remaining two-step oxidations. N-desmethylustiloxin F is then methylated by ustM to yield ustiloxin F which in turn substrate of the cytochrome P450 monooxygenase ustC which catalyzes the formation of S-deoxyustiloxin H. The flavoprotein monooxygenases ustF1 and ustF2 then participate in the modification of the side chain of S-deoxyustiloxin H, leading to the synthesis of an oxime intermediate, via ustiloxin H. Finally, carboxylative dehydration performed by the cysteine desulfurase-like protein ustD yields ustiloxin B. This Aspergillus flavus (strain ATCC 200026 / FGSC A1120 / IAM 13836 / NRRL 3357 / JCM 12722 / SRRC 167) protein is Flavin-containing monooxygenase ustF2.